Consider the following 169-residue polypeptide: Nucleoside diphosphate kinase 3-A (169 aa).

Residues lysine 29, arginine 105, threonine 111, arginine 122, valine 129, and asparagine 132 each coordinate ADP. Histidine 135 functions as the Pros-phosphohistidine intermediate in the catalytic mechanism.

The protein belongs to the NDK family. In terms of assembly, homohexamer. It depends on Mg(2+) as a cofactor.

Its subcellular location is the mitochondrion outer membrane. The protein localises to the cytoplasm. The protein resides in the cytoskeleton. It is found in the cilium basal body. It carries out the reaction a 2'-deoxyribonucleoside 5'-diphosphate + ATP = a 2'-deoxyribonucleoside 5'-triphosphate + ADP. It catalyses the reaction a ribonucleoside 5'-diphosphate + ATP = a ribonucleoside 5'-triphosphate + ADP. In terms of biological role, catalyzes the phosphorylation of ribonucleosides and deoxyribonucleoside diphosphates, other than ATP, into the corresponding triphosphates with ATP as the major phosphate donor. The ATP gamma phosphate is transferred to the nucleoside diphosphate beta phosphate via a ping-pong mechanism, using a phosphorylated active-site intermediate. Through the catalyzed exchange of gamma-phosphate between di- and triphosphonucleosides participates in regulation of intracellular nucleotide homeostasis. Required for ciliary function during renal development. Independently of its kinase activity, facilitates mitochondrial tethering prior to membrane fusion through its direct membrane-binding and hexamerization. Implicated in repair of both single- and double-stranded breaks in DNA, independently of its kinase activity. This chain is Nucleoside diphosphate kinase 3-A, found in Xenopus laevis (African clawed frog).